The primary structure comprises 180 residues: Small ribosomal subunit protein uS4 (180 aa).

The S4 RNA-binding domain maps to 102 to 174 (RRLQTMLVRK…PARKLEQKEE (73 aa)). Positions 154–180 (VPFSPLANPEHPARKLEQKEETNEESA) are disordered. Positions 164-174 (HPARKLEQKEE) are enriched in basic and acidic residues.

This sequence belongs to the universal ribosomal protein uS4 family. Part of the 30S ribosomal subunit. Contacts protein S5. The interaction surface between S4 and S5 is involved in control of translational fidelity.

In terms of biological role, one of the primary rRNA binding proteins, it binds directly to 16S rRNA where it nucleates assembly of the body of the 30S subunit. Functionally, with S5 and S12 plays an important role in translational accuracy. The polypeptide is Small ribosomal subunit protein uS4 (Nanoarchaeum equitans (strain Kin4-M)).